Reading from the N-terminus, the 113-residue chain is Large ribosomal subunit protein bL17 (113 aa).

This sequence belongs to the bacterial ribosomal protein bL17 family. As to quaternary structure, part of the 50S ribosomal subunit. Contacts protein L32.

The sequence is that of Large ribosomal subunit protein bL17 from Clostridium novyi (strain NT).